The following is a 242-amino-acid chain: MKILIPTAKEMNTDLPSIEAIPLKPESQAVLDALALYSASQLESFYKVSAEKAAEEFQNIQALKRQTAQHYPALKLFDGLMYRNIKRDKLTEAEQDYLENHVFITSALYGVVPVLSPMAPHRLDFLMKLKVAGKTLKSHWKAAYDETLKKEEVIFSLLSSEFETVFSKEIRAKMVTFKFMEDRGGQLKIHSTISKKARGAFLTALIENQVQTVGEARRLNFAGFVYREDLSQPQGLVFVKEV.

It belongs to the UPF0246 family.

This is UPF0246 protein SPH_1662 from Streptococcus pneumoniae (strain Hungary19A-6).